The sequence spans 272 residues: Orotidine 5'-phosphate decarboxylase (272 aa).

K93 serves as the catalytic Proton donor.

It belongs to the OMP decarboxylase family. Type 2 subfamily.

The catalysed reaction is orotidine 5'-phosphate + H(+) = UMP + CO2. The protein operates within pyrimidine metabolism; UMP biosynthesis via de novo pathway; UMP from orotate: step 2/2. The sequence is that of Orotidine 5'-phosphate decarboxylase from Roseiflexus castenholzii (strain DSM 13941 / HLO8).